The following is a 436-amino-acid chain: Histidine--tRNA ligase (436 aa).

It belongs to the class-II aminoacyl-tRNA synthetase family. Homodimer.

It localises to the cytoplasm. The catalysed reaction is tRNA(His) + L-histidine + ATP = L-histidyl-tRNA(His) + AMP + diphosphate + H(+). The polypeptide is Histidine--tRNA ligase (Prochlorococcus marinus (strain MIT 9313)).